The sequence spans 497 residues: Vacuolar fusion protein CCZ1 homolog B (497 aa).

Positions Gly244–Thr284 are disordered.

This sequence belongs to the CCZ1 family. Interacts with MON1.

The protein resides in the endosome. The protein localises to the prevacuolar compartment. In terms of biological role, plays an important role in membrane trafficking through the secretory apparatus. In complex with MON1, acts as a guanine exchange factor (GEF) for RABG3F of the RAB7 protein family. Promotes the exchange of GDP to GTP, converting RABG3F from an inactive GDP-bound form into an active GTP-bound form. The RABG3F active form is involved in protein trafficking from prevacuolar compartments (PVCs) to vacuoles. May serve as a linker between Rab5 and Rab7 protein families in PVCs and mediate PVC maturation. In Arabidopsis thaliana (Mouse-ear cress), this protein is Vacuolar fusion protein CCZ1 homolog B.